The chain runs to 203 residues: Urease accessory protein UreG (203 aa).

12-19 is a binding site for GTP; that stretch reads GPVGSGKT.

It belongs to the SIMIBI class G3E GTPase family. UreG subfamily. As to quaternary structure, homodimer. UreD, UreF and UreG form a complex that acts as a GTP-hydrolysis-dependent molecular chaperone, activating the urease apoprotein by helping to assemble the nickel containing metallocenter of UreC. The UreE protein probably delivers the nickel.

It is found in the cytoplasm. Functionally, facilitates the functional incorporation of the urease nickel metallocenter. This process requires GTP hydrolysis, probably effectuated by UreG. The polypeptide is Urease accessory protein UreG (Alteromonas mediterranea (strain DSM 17117 / CIP 110805 / LMG 28347 / Deep ecotype)).